The sequence spans 133 residues: MSNINLVQLVRDSLFTIGCPPSIITDLDSHSAITISLDSMPAINIALVNEQVMLWANFDAPSDVKLQSSAYNILNLMLMNFSYSINELVELHRSDEYLQLRVVIKDDYVHDGIVFAEILHEFYQRMEILNGVL.

It belongs to the SpaK family. In terms of assembly, homodimer.

Required for surface presentation of invasion plasmid antigens. Chaperone specialized in the storage of effectors within the bacterial cytoplasm, maintaining them in a secretion-competent state, and allowing their immediate delivery to target cells upon contact of the bacterium with the host cells. Has been shown to chaperone IpaA, IpgB1, OspC3 and probably also OspB. This is Surface presentation of antigens protein SpaK (spaK) from Shigella flexneri.